The sequence spans 215 residues: Cytochrome b6 (215 aa).

Residues 32 to 52 (IFYCLGGITFTSFVIQVASGF) form a helical membrane-spanning segment. Cysteine 35 is a heme c binding site. Heme b is bound by residues histidine 86 and histidine 100. The next 3 membrane-spanning stretches (helical) occupy residues 90–110 (ASMMVLMMILHIFRVYLTGGF), 116–136 (LTWVTGVILSVLTVSFGVTGY), and 186–206 (LHTFVLPLLTAVFMLMHFLMI). Heme b is bound by residues histidine 187 and histidine 202.

This sequence belongs to the cytochrome b family. PetB subfamily. As to quaternary structure, the 4 large subunits of the cytochrome b6-f complex are cytochrome b6, subunit IV (17 kDa polypeptide, PetD), cytochrome f and the Rieske protein, while the 4 small subunits are PetG, PetL, PetM and PetN. The complex functions as a dimer. The cofactor is heme b. It depends on heme c as a cofactor.

Its subcellular location is the plastid. It localises to the chloroplast thylakoid membrane. In terms of biological role, component of the cytochrome b6-f complex, which mediates electron transfer between photosystem II (PSII) and photosystem I (PSI), cyclic electron flow around PSI, and state transitions. This Chaetosphaeridium globosum (Charophycean green alga) protein is Cytochrome b6.